A 274-amino-acid chain; its full sequence is Putative phosphoenolpyruvate synthase regulatory protein (274 aa).

154–161 is a binding site for ADP; sequence AVSRSGKT.

The protein belongs to the pyruvate, phosphate/water dikinase regulatory protein family. PSRP subfamily.

The catalysed reaction is [pyruvate, water dikinase] + ADP = [pyruvate, water dikinase]-phosphate + AMP + H(+). It carries out the reaction [pyruvate, water dikinase]-phosphate + phosphate + H(+) = [pyruvate, water dikinase] + diphosphate. Its function is as follows. Bifunctional serine/threonine kinase and phosphorylase involved in the regulation of the phosphoenolpyruvate synthase (PEPS) by catalyzing its phosphorylation/dephosphorylation. The polypeptide is Putative phosphoenolpyruvate synthase regulatory protein (Alkalilimnicola ehrlichii (strain ATCC BAA-1101 / DSM 17681 / MLHE-1)).